The following is a 344-amino-acid chain: tRNA N6-adenosine threonylcarbamoyltransferase (344 aa).

Residues histidine 113 and histidine 117 each contribute to the Fe cation site. Residues 135–139, aspartate 169, glycine 182, aspartate 186, and asparagine 278 each bind substrate; that span reads LVSGG. Residue aspartate 306 participates in Fe cation binding.

The protein belongs to the KAE1 / TsaD family. Fe(2+) serves as cofactor.

It is found in the cytoplasm. It carries out the reaction L-threonylcarbamoyladenylate + adenosine(37) in tRNA = N(6)-L-threonylcarbamoyladenosine(37) in tRNA + AMP + H(+). Functionally, required for the formation of a threonylcarbamoyl group on adenosine at position 37 (t(6)A37) in tRNAs that read codons beginning with adenine. Is involved in the transfer of the threonylcarbamoyl moiety of threonylcarbamoyl-AMP (TC-AMP) to the N6 group of A37, together with TsaE and TsaB. TsaD likely plays a direct catalytic role in this reaction. This is tRNA N6-adenosine threonylcarbamoyltransferase from Corynebacterium efficiens (strain DSM 44549 / YS-314 / AJ 12310 / JCM 11189 / NBRC 100395).